The primary structure comprises 390 residues: Nuclear receptor subfamily 2 group F member 6 (390 aa).

Residues 1-15 (MAMVTGGWGDPGGDT) are compositionally biased toward gly residues. The segment at 1-50 (MAMVTGGWGDPGGDTNGVDKAGGSYPRATEDDSASPPGATSDAEPGDEER) is disordered. Phosphoserine is present on residues S35 and S41. Positions 54 to 129 (QVDCVVCGDK…VGMRKEAVQR (76 aa)) form a DNA-binding region, nuclear receptor. The segment at 57–77 (CVVCGDKSSGKHYGVFTCEGC) adopts an NR C4-type zinc-finger fold. Phosphoserine is present on S84. Residues 93–117 (CRSNRDCQIDQHHRNQCQYCRLKKC) form an NR C4-type zinc finger. The region spanning 157 to 380 (PVSELIAQLL…TLIRDMLLSG (224 aa)) is the NR LBD domain. The interval 314–390 (LQEKAQVALT…STFNWPYGSG (77 aa)) is important for dimerization.

The protein belongs to the nuclear hormone receptor family. NR2 subfamily. Binds DNA as dimer; homodimer and heterodimer with NR2F2 and probably NR2F1. Interacts with THRB.

The protein resides in the nucleus. Transcription factor predominantly involved in transcriptional repression. Binds to promoter/enhancer response elements that contain the imperfect 5'-AGGTCA-3' direct or inverted repeats with various spacings which are also recognized by other nuclear hormone receptors. Involved in modulation of hormonal responses. Represses transcriptional activity of the lutropin-choriogonadotropic hormone receptor/LHCGR gene, the renin/REN gene and the oxytocin-neurophysin/OXT gene. Represses the triiodothyronine-dependent and -independent transcriptional activity of the thyroid hormone receptor gene in a cell type-specific manner. The corepressing function towards thyroid hormone receptor beta/THRB involves at least in part the inhibition of THRB binding to triiodothyronine response elements (TREs) by NR2F6. Inhibits NFATC transcription factor DNA binding and subsequently its transcriptional activity. Acts as transcriptional repressor of IL-17 expression in Th-17 differentiated CD4(+) T cells and may be involved in induction and/or maintenance of peripheral immunological tolerance and autoimmunity. Involved in development of forebrain circadian clock; is required early in the development of the locus coeruleus (LC). The polypeptide is Nuclear receptor subfamily 2 group F member 6 (Nr2f6) (Mus musculus (Mouse)).